We begin with the raw amino-acid sequence, 403 residues long: tRNA pseudouridine synthase 4 (403 aa).

The active-site Nucleophile is aspartate 75.

This sequence belongs to the pseudouridine synthase TruB family.

The protein localises to the nucleus. Its subcellular location is the mitochondrion. It carries out the reaction uridine(55) in tRNA = pseudouridine(55) in tRNA. The enzyme catalyses a uridine in mRNA = a pseudouridine in mRNA. Its function is as follows. Responsible for synthesis of pseudouridine from uracil-55 in the psi GC loop of transfer RNAs. Also catalyzes pseudouridylation of mRNAs with the consensus sequence 5'-GGUUCRA-3'. The protein is tRNA pseudouridine synthase 4 (PUS4) of Saccharomyces cerevisiae (strain ATCC 204508 / S288c) (Baker's yeast).